Consider the following 492-residue polypeptide: Protein adenylyltransferase Fic (492 aa).

Low complexity predominate over residues 1–18 (MGTEAEQPSPPAQQQDQE). The segment at 1–26 (MGTEAEQPSPPAQQQDQENPPLCKAQ) is disordered. The chain crosses the membrane as a helical span at residues 33–55 (LYRFVLIFVAGSLAAWTFHALSS). 2 TPR repeats span residues 118–151 (ALGA…APRH) and 152–186 (PEVL…SPSN). Residues 243–248 (SVGIEG) carry the Inhibitory (S/T)XXXE(G/N) motif motif. Residues glutamate 247 and 328–331 (VGGH) contribute to the ATP site. The 136-residue stretch at 297 to 432 (ITIKDILELH…IRPFVRFIAD (136 aa)) folds into the Fido domain. Histidine 375 is an active-site residue. ATP contacts are provided by residues 379–386 (DGNGRTSR), 411–412 (YY), and asparagine 419.

Belongs to the fic family. In terms of assembly, homodimer; homodimerization may regulate adenylyltransferase and phosphodiesterase activities.

The protein localises to the membrane. The catalysed reaction is L-tyrosyl-[protein] + ATP = O-(5'-adenylyl)-L-tyrosyl-[protein] + diphosphate. The enzyme catalyses L-threonyl-[protein] + ATP = 3-O-(5'-adenylyl)-L-threonyl-[protein] + diphosphate. It catalyses the reaction 3-O-(5'-adenylyl)-L-threonyl-[protein] + H2O = L-threonyl-[protein] + AMP + H(+). The side chain of Glu-247 determines which of the two opposing activities (AMPylase or de-AMPylase) will take place. In response to endoplasmic reticulum stress, mediates de-AMPylase activity. Adenylyltransferase activity is inhibited by the inhibitory helix present at the N-terminus: Glu-247 binds ATP and competes with ATP-binding at Arg-386, thereby preventing adenylyltransferase activity. In unstressed cells, disengagement of Glu-247 promotes adenylyltransferase activity. Activation dissociates ATP-binding from Glu-247, allowing ordered binding of the entire ATP moiety with the alpha-phosphate in an orientation that is productive for accepting an incoming target hydroxyl side chain. Its function is as follows. Protein that can both mediate the addition of adenosine 5'-monophosphate (AMP) to specific residues of target proteins (AMPylation), and the removal of the same modification from target proteins (de-AMPylation), depending on the context. The side chain of Glu-247 determines which of the two opposing activities (AMPylase or de-AMPylase) will take place. Acts as a key regulator of the unfolded protein response (UPR) by mediating AMPylation or de-AMPylation of Hsc70-3/BiP. In unstressed cells, acts as an adenylyltransferase by mediating AMPylation of Hsc70-3/BiP at 'Thr-518', thereby inactivating it. In response to endoplasmic reticulum stress, acts as a phosphodiesterase by mediating removal of ATP (de-AMPylation) from Hsc70-3/BiP at 'Thr-518', leading to restore HSPA5/BiP activity. In Drosophila melanogaster (Fruit fly), this protein is Protein adenylyltransferase Fic.